The following is a 587-amino-acid chain: Kelch-like ECH-associated protein 1B (587 aa).

The 74-residue stretch at 44-117 (CDVTLRVRYC…AYTASISVGE (74 aa)) folds into the BTB domain. The BACK domain occupies 153-253 (IGIASFAEQI…LTPHFLQRQL (101 aa)). Kelch repeat units lie at residues 292–337 (LIYT…VISG), 338–388 (LLYA…VIDG), 389–435 (MIYA…VINR), 436–482 (LLYA…ALGN), 484–529 (IYVM…THHG), and 530–576 (RIYV…VTME).

Belongs to the KEAP1 family. As to quaternary structure, homodimer and heterodimer; heterodimerizes with keap1a. Component of the BCR(KEAP1) E3 ubiquitin ligase complex, at least composed of 2 molecules of cul3, 2 molecules of keap1 (keap1a and/or keap1b), and rbx1. Interacts with nfe2l2/nrf2; the interaction is direct. In terms of processing, non-enzymatic covalent modifications of reactive cysteines by electrophile metabolites inactivate the BCR(KEAP1) complex. Widely expressed.

It is found in the cytoplasm. It localises to the nucleus. It functions in the pathway protein modification; protein ubiquitination. Its activity is regulated as follows. Ubiquitin ligase activity of the BCR(KEAP1) complex is inhibited by oxidative stress and electrophile metabolites such as sulforaphane. Electrophile metabolites react with reactive cysteine residues in keap1 and trigger non-enzymatic covalent modifications of these cysteine residues, leading to inactivate the ubiquitin ligase activity of the BCR(KEAP1) complex. Its function is as follows. Substrate-specific adapter of a BCR (BTB-CUL3-RBX1) E3 ubiquitin ligase complex that regulates the response to oxidative stress by targeting nfe2l2/nrf2 for ubiquitination. Keap1 acts as a key sensor of oxidative and electrophilic stress: in normal conditions, the BCR(KEAP1) complex mediates ubiquitination and degradation of nfe2l2/nrf2, a transcription factor regulating expression of many cytoprotective genes. In response to oxidative stress, different electrophile metabolites trigger non-enzymatic covalent modifications of highly reactive cysteine residues in KEAP1, leading to inactivate the ubiquitin ligase activity of the BCR(KEAP1) complex, promoting nfe2l2/nrf2 nuclear accumulation and expression of phase II detoxifying enzymes. This is Kelch-like ECH-associated protein 1B from Danio rerio (Zebrafish).